The sequence spans 248 residues: Spherulin-1B (248 aa).

The N-terminal stretch at 1 to 20 (MQVRNILVALVVVCFAVSEA) is a signal peptide. One can recognise a Cupin type-1 domain in the interval 61–207 (FDFKNSKLGV…SLNISSIQTV (147 aa)). Residues His-110, His-112, Glu-117, and His-157 each coordinate Mn(2+). Asn-200 carries an N-linked (GlcNAc...) asparagine glycan.

The protein belongs to the germin family.

The protein resides in the secreted. It localises to the cell wall. The protein is Spherulin-1B of Physarum polycephalum (Slime mold).